A 437-amino-acid chain; its full sequence is ATP-dependent RNA helicase RhlB (437 aa).

The Q motif signature appears at 9–37 (QKFADLGLQPQVTEGLEKKGFEYCTPIQA). The Helicase ATP-binding domain maps to 40–219 (LPVLLTGQDI…FEHMHNPEHV (180 aa)). 53-60 (AQTGTGKT) contributes to the ATP binding site. Residues 165–168 (DEAD) carry the DEAD box motif. Residues 245–390 (ALLQTLIEEE…VSEYDASALI (146 aa)) enclose the Helicase C-terminal domain. The interval 397–437 (IRMRAPRVQQRRTNTGGTRSGNRKPQGRRPRQPRQSAPKQS) is disordered. The span at 417–428 (GNRKPQGRRPRQ) shows a compositional bias: basic residues.

This sequence belongs to the DEAD box helicase family. RhlB subfamily. Component of the RNA degradosome, which is a multiprotein complex involved in RNA processing and mRNA degradation.

It localises to the cytoplasm. It catalyses the reaction ATP + H2O = ADP + phosphate + H(+). In terms of biological role, DEAD-box RNA helicase involved in RNA degradation. Has RNA-dependent ATPase activity and unwinds double-stranded RNA. This chain is ATP-dependent RNA helicase RhlB, found in Vibrio parahaemolyticus serotype O3:K6 (strain RIMD 2210633).